The chain runs to 227 residues: Ribose-5-phosphate isomerase A (227 aa).

Substrate-binding positions include 26–29 (TGST), 82–85 (DGAD), and 95–98 (KGGG). Catalysis depends on Glu104, which acts as the Proton acceptor. Residue Lys122 coordinates substrate.

It belongs to the ribose 5-phosphate isomerase family. Homodimer.

The enzyme catalyses aldehydo-D-ribose 5-phosphate = D-ribulose 5-phosphate. It functions in the pathway carbohydrate degradation; pentose phosphate pathway; D-ribose 5-phosphate from D-ribulose 5-phosphate (non-oxidative stage): step 1/1. Catalyzes the reversible conversion of ribose-5-phosphate to ribulose 5-phosphate. This is Ribose-5-phosphate isomerase A from Streptococcus pneumoniae serotype 4 (strain ATCC BAA-334 / TIGR4).